A 218-amino-acid polypeptide reads, in one-letter code: Small ribosomal subunit protein uS5 (218 aa).

Residues 1 to 45 (MPGRQRRDGGNGPAGQNSNGPEGRDNRRGGGDRRGGGDRRDNAAE) form a disordered region. Over residues 22 to 45 (EGRDNRRGGGDRRGGGDRRDNAAE) the composition is skewed to basic and acidic residues. One can recognise an S5 DRBM domain in the interval 48 to 111 (QLERVVAINR…EEARKGFFRV (64 aa)).

This sequence belongs to the universal ribosomal protein uS5 family. As to quaternary structure, part of the 30S ribosomal subunit. Contacts proteins S4 and S8.

Its function is as follows. With S4 and S12 plays an important role in translational accuracy. Located at the back of the 30S subunit body where it stabilizes the conformation of the head with respect to the body. In Nocardia farcinica (strain IFM 10152), this protein is Small ribosomal subunit protein uS5.